Consider the following 406-residue polypeptide: Putative colanic acid biosynthesis glycosyltransferase WcaL (406 aa).

The protein belongs to the glycosyltransferase group 1 family. Glycosyltransferase 4 subfamily.

The protein operates within slime biogenesis; slime polysaccharide biosynthesis. This chain is Putative colanic acid biosynthesis glycosyltransferase WcaL (wcaL), found in Salmonella typhimurium (strain LT2 / SGSC1412 / ATCC 700720).